The following is a 341-amino-acid chain: S-adenosylmethionine:tRNA ribosyltransferase-isomerase (341 aa).

This sequence belongs to the QueA family. As to quaternary structure, monomer.

It localises to the cytoplasm. The catalysed reaction is 7-aminomethyl-7-carbaguanosine(34) in tRNA + S-adenosyl-L-methionine = epoxyqueuosine(34) in tRNA + adenine + L-methionine + 2 H(+). It participates in tRNA modification; tRNA-queuosine biosynthesis. In terms of biological role, transfers and isomerizes the ribose moiety from AdoMet to the 7-aminomethyl group of 7-deazaguanine (preQ1-tRNA) to give epoxyqueuosine (oQ-tRNA). In Chlorobium phaeobacteroides (strain DSM 266 / SMG 266 / 2430), this protein is S-adenosylmethionine:tRNA ribosyltransferase-isomerase.